Reading from the N-terminus, the 430-residue chain is Serine--tRNA ligase (430 aa).

L-serine is bound at residue T237 to E239. R268–E270 contributes to the ATP binding site. Residue E291 coordinates L-serine. Residue E355–S358 coordinates ATP. S391 provides a ligand contact to L-serine.

It belongs to the class-II aminoacyl-tRNA synthetase family. Type-1 seryl-tRNA synthetase subfamily. As to quaternary structure, homodimer. The tRNA molecule binds across the dimer.

It localises to the cytoplasm. It carries out the reaction tRNA(Ser) + L-serine + ATP = L-seryl-tRNA(Ser) + AMP + diphosphate + H(+). It catalyses the reaction tRNA(Sec) + L-serine + ATP = L-seryl-tRNA(Sec) + AMP + diphosphate + H(+). Its pathway is aminoacyl-tRNA biosynthesis; selenocysteinyl-tRNA(Sec) biosynthesis; L-seryl-tRNA(Sec) from L-serine and tRNA(Sec): step 1/1. In terms of biological role, catalyzes the attachment of serine to tRNA(Ser). Is also able to aminoacylate tRNA(Sec) with serine, to form the misacylated tRNA L-seryl-tRNA(Sec), which will be further converted into selenocysteinyl-tRNA(Sec). This Salmonella heidelberg (strain SL476) protein is Serine--tRNA ligase.